The following is a 355-amino-acid chain: Uroporphyrinogen decarboxylase (355 aa).

Residues 27 to 31 (RQAGR), Asp-78, Tyr-155, Ser-210, and His-328 contribute to the substrate site.

This sequence belongs to the uroporphyrinogen decarboxylase family. Homodimer.

It localises to the cytoplasm. The catalysed reaction is uroporphyrinogen III + 4 H(+) = coproporphyrinogen III + 4 CO2. It participates in porphyrin-containing compound metabolism; protoporphyrin-IX biosynthesis; coproporphyrinogen-III from 5-aminolevulinate: step 4/4. Its function is as follows. Catalyzes the decarboxylation of four acetate groups of uroporphyrinogen-III to yield coproporphyrinogen-III. The sequence is that of Uroporphyrinogen decarboxylase from Ectopseudomonas mendocina (strain ymp) (Pseudomonas mendocina).